The sequence spans 515 residues: Maturase K (515 aa).

This sequence belongs to the intron maturase 2 family. MatK subfamily.

Its subcellular location is the plastid. It is found in the chloroplast. Usually encoded in the trnK tRNA gene intron. Probably assists in splicing its own and other chloroplast group II introns. In Picea abies (Norway spruce), this protein is Maturase K.